The following is a 149-amino-acid chain: FKBP-type 16 kDa peptidyl-prolyl cis-trans isomerase (149 aa).

The 71-residue stretch at 2 to 72 (SESVQSNSAV…FSLEPDAAFG (71 aa)) folds into the PPIase FKBP-type domain.

It belongs to the FKBP-type PPIase family.

It carries out the reaction [protein]-peptidylproline (omega=180) = [protein]-peptidylproline (omega=0). PPIases accelerate the folding of proteins. Substrate specificity carried out with 'Suc-Ala-Xaa-Pro-Phe-4-nitroanilide', where Xaa is the amino acid tested, was found to be Phe &gt; Leu &gt;&gt; Ile &gt; Lys = Ala &gt; Trp &gt; His &gt;&gt; Gln. The protein is FKBP-type 16 kDa peptidyl-prolyl cis-trans isomerase (fkpB) of Escherichia coli O6:H1 (strain CFT073 / ATCC 700928 / UPEC).